Reading from the N-terminus, the 518-residue chain is Serine hydroxymethyltransferase, mitochondrial (518 aa).

The N-terminal 31 residues, 1–31, are a transit peptide targeting the mitochondrion; the sequence is MAMAMALRKLSSSVNKSSRPLFSASSLYYKS. An N6-(pyridoxal phosphate)lysine modification is found at K287.

Belongs to the SHMT family. As to quaternary structure, homotetramer. It depends on pyridoxal 5'-phosphate as a cofactor.

Its subcellular location is the mitochondrion. The catalysed reaction is (6R)-5,10-methylene-5,6,7,8-tetrahydrofolate + glycine + H2O = (6S)-5,6,7,8-tetrahydrofolate + L-serine. It functions in the pathway one-carbon metabolism; tetrahydrofolate interconversion. Functionally, catalyzes the interconversion of serine and glycine. This is Serine hydroxymethyltransferase, mitochondrial from Pisum sativum (Garden pea).